A 710-amino-acid polypeptide reads, in one-letter code: PC3-like endoprotease variant B (710 aa).

The N-terminal stretch at 1-29 (MNYRGIYRRRYVFVLLLLVAVVNISYGWT) is a signal peptide. 3 N-linked (GlcNAc...) asparagine glycosylation sites follow: N23, N62, and N190. Positions 30 to 152 (VLKNKDYKRR…QQKILERVKR (123 aa)) are excised as a propeptide. Residues 164–486 (MWYLLNTGQA…FGRLDANAMV (323 aa)) form the Peptidase S8 domain. Catalysis depends on charge relay system residues D202 and H242. 2 disulfide bridges follow: C259-C411 and C351-C381. S419 (charge relay system) is an active-site residue. The region spanning 495-638 (LPAQRKCTAA…EERVIDTQTK (144 aa)) is the P/Homo B domain. Cysteines 501 and 527 form a disulfide. The tract at residues 668–710 (TIEGSTQDHVKPKEGAKEPWGNYRNTNNINNNSSTAFKRKKKQ) is disordered. The segment covering 673–684 (TQDHVKPKEGAK) has biased composition (basic and acidic residues). The span at 689 to 699 (NYRNTNNINNN) shows a compositional bias: low complexity. N-linked (GlcNAc...) asparagine glycans are attached at residues N698 and N699.

Belongs to the peptidase S8 family. Furin subfamily. As to expression, predominantly in the body column.

In terms of biological role, probably involved in the processing of hormone and other protein precursors at sites comprised of pairs of basic amino acid residues. The sequence is that of PC3-like endoprotease variant B from Hydra vulgaris (Hydra).